We begin with the raw amino-acid sequence, 378 residues long: Isobutylamine N-hydroxylase (378 aa).

As to quaternary structure, exists in dimeric or trimeric form depending upon buffer conditions. It can form an isobutylamine N-hydroxylase two component enzyme system formed of a flavin reductase component (VlmR) and a monooxygenase component (VlmH).

It catalyses the reaction 2-methylpropan-1-amine + FADH2 + O2 = N-(2-methylpropyl)hydroxylamine + FAD + H2O + 2 H(+). It carries out the reaction 2-methylpropan-1-amine + FMNH2 + O2 = N-(2-methylpropyl)hydroxylamine + FMN + H2O + 2 H(+). With respect to regulation, inhibited by 5',5'-dithio-bis(2-nitrobenzoic acid) (DTNB) and 4-(hydroxymercuri)benzoic acid (p-HMB). Its function is as follows. Involved in the biosynthesis of the azoxy antibiotic valanimycin, which has an antitumor activity. Catalyzes the oxidation of isobutylamine to isobutylhydroxylamine via the formation of a flavin 4a-hydroperoxide. Unlike other known N-hydroxylases, isobutylamine N-hydroxylase cannot carry out the reduction of the flavin cofactor and requires the NADPH-flavin oxidoreductase VlmR. Also able to oxidize propan-1-amine, butan-1-amine, butan-2-amine and benzylamine. It has a similar activity with either FMNH(2) or FADH(2). This is Isobutylamine N-hydroxylase from Streptomyces viridifaciens.